A 386-amino-acid polypeptide reads, in one-letter code: Mannitol-1-phosphate 5-dehydrogenase (386 aa).

4–15 (ALHFGAGNIGRG) serves as a coordination point for NAD(+).

Belongs to the mannitol dehydrogenase family.

It carries out the reaction D-mannitol 1-phosphate + NAD(+) = beta-D-fructose 6-phosphate + NADH + H(+). In Caldanaerobacter subterraneus subsp. tengcongensis (strain DSM 15242 / JCM 11007 / NBRC 100824 / MB4) (Thermoanaerobacter tengcongensis), this protein is Mannitol-1-phosphate 5-dehydrogenase.